The chain runs to 377 residues: Succinyl-diaminopimelate desuccinylase (377 aa).

Position 66 (His66) interacts with Zn(2+). Residue Asp68 is part of the active site. Asp99 provides a ligand contact to Zn(2+). Catalysis depends on Glu133, which acts as the Proton acceptor. Glu134, Glu162, and His348 together coordinate Zn(2+).

The protein belongs to the peptidase M20A family. DapE subfamily. Homodimer. Zn(2+) serves as cofactor. Co(2+) is required as a cofactor.

The catalysed reaction is N-succinyl-(2S,6S)-2,6-diaminopimelate + H2O = (2S,6S)-2,6-diaminopimelate + succinate. It participates in amino-acid biosynthesis; L-lysine biosynthesis via DAP pathway; LL-2,6-diaminopimelate from (S)-tetrahydrodipicolinate (succinylase route): step 3/3. Catalyzes the hydrolysis of N-succinyl-L,L-diaminopimelic acid (SDAP), forming succinate and LL-2,6-diaminopimelate (DAP), an intermediate involved in the bacterial biosynthesis of lysine and meso-diaminopimelic acid, an essential component of bacterial cell walls. This chain is Succinyl-diaminopimelate desuccinylase, found in Methylococcus capsulatus (strain ATCC 33009 / NCIMB 11132 / Bath).